The primary structure comprises 362 residues: Melatonin receptor type 1B (362 aa).

Residues 1–42 (MSENGSFANCCEAGGWAVRPGWSGAGSARPSRTPRPPWVAPA) are Extracellular-facing. Residue N4 is glycosylated (N-linked (GlcNAc...) asparagine). The chain crosses the membrane as a helical span at residues 43 to 63 (LSAVLIVTTAVDVVGNLLVIL). Topologically, residues 64–76 (SVLRNRKLRNAGN) are cytoplasmic. A helical membrane pass occupies residues 77–97 (LFLVSLALADLVVAFYPYPLI). Residues 98-115 (LVAIFYDGWALGEEHCKA) are Extracellular-facing. Cysteines 113 and 190 form a disulfide. A helical transmembrane segment spans residues 116-136 (SAFVMGLSVIGSVFNITAIAI). Over 137–155 (NRYCYICHSMAYHRIYRRW) the chain is Cytoplasmic. A helical transmembrane segment spans residues 156–176 (HTPLHICLIWLLTVVALLPNF). The melatonin site is built by N175 and Q194. Over 177 to 200 (FVGSLEYDPRIYSCTFIQTASTQY) the chain is Extracellular. Residues 201–221 (TAAVVVIHFLLPIAVVSFCYL) form a helical membrane-spanning segment. Residues 222 to 253 (RIWVLVLQARRKAKPESRLCLKPSDLRSFLTM) lie on the Cytoplasmic side of the membrane. Residues 254–274 (FVVFVIFAICWAPLNCIGLAV) traverse the membrane as a helical segment. Over 275–287 (AINPQEMAPQIPE) the chain is Extracellular. Residues 288 to 308 (GLFVTSYLLAYFNSCLNAIVY) form a helical membrane-spanning segment. Topologically, residues 309–362 (GLLNQNFRREYKRILLALWNPRHCIQDASKGSHAEGLQSPAPPIIGVQHQADAL) are cytoplasmic.

The protein belongs to the G-protein coupled receptor 1 family. In terms of assembly, interacts with GPR61, GPR62 and GPR135. Expressed in retina and less in brain and hippocampus.

The protein localises to the cell membrane. Functionally, high affinity receptor for melatonin. Likely to mediate the reproductive and circadian actions of melatonin. The activity of this receptor is mediated by pertussis toxin sensitive G proteins that inhibit adenylate cyclase activity. The sequence is that of Melatonin receptor type 1B (MTNR1B) from Homo sapiens (Human).